A 434-amino-acid chain; its full sequence is GTPase Obg (434 aa).

Positions 1–158 (MFLDTAKIKV…RELQLELKIL (158 aa)) constitute an Obg domain. One can recognise an OBG-type G domain in the interval 159-336 (ADVGLVGFPS…LLDATAELLD (178 aa)). GTP-binding positions include 165–172 (GFPSVGKS), 190–194 (FTTIV), 212–215 (DLPG), 282–285 (NKMD), and 317–319 (SGL). Residues serine 172 and threonine 192 each contribute to the Mg(2+) site. An OCT domain is found at 356 to 434 (GFDEEEKAFE…IGKFEFEFVD (79 aa)).

Belongs to the TRAFAC class OBG-HflX-like GTPase superfamily. OBG GTPase family. Monomer. The cofactor is Mg(2+).

It localises to the cytoplasm. Functionally, an essential GTPase which binds GTP, GDP and possibly (p)ppGpp with moderate affinity, with high nucleotide exchange rates and a fairly low GTP hydrolysis rate. Plays a role in control of the cell cycle, stress response, ribosome biogenesis and in those bacteria that undergo differentiation, in morphogenesis control. The polypeptide is GTPase Obg (Streptococcus pneumoniae (strain ATCC 700669 / Spain 23F-1)).